The following is a 479-amino-acid chain: Putative F-box protein At1g67390 (479 aa).

The region spanning 40 to 88 is the F-box domain; sequence DDRISKLPDDVLVMILASLSTEDALKTSVLSTRWKNVWKQVPYLHFDLL.

The sequence is that of Putative F-box protein At1g67390 from Arabidopsis thaliana (Mouse-ear cress).